An 87-amino-acid polypeptide reads, in one-letter code: Cytochrome c oxidase assembly factor 3, mitochondrial (87 aa).

The chain crosses the membrane as a helical span at residues 47–69 (NNLLTAGALGVSVLAIYGYSIFS).

Belongs to the COA3 family.

Its subcellular location is the mitochondrion membrane. Its function is as follows. Plays a critical role in the biogenesis and activity of cytochrome c oxidase (COX) (complex IV). This is Cytochrome c oxidase assembly factor 3, mitochondrial (Ccdc56) from Drosophila melanogaster (Fruit fly).